The sequence spans 221 residues: Ubiquitin-conjugating enzyme E2 S (221 aa).

The UBC core domain maps to Q11–M157. C95 (glycyl thioester intermediate) is an active-site residue. The segment at G158–L221 is disordered. The segment covering G193–I206 has biased composition (low complexity). Residues A208–L221 show a composition bias toward basic residues.

Belongs to the ubiquitin-conjugating enzyme family.

The catalysed reaction is S-ubiquitinyl-[E1 ubiquitin-activating enzyme]-L-cysteine + [E2 ubiquitin-conjugating enzyme]-L-cysteine = [E1 ubiquitin-activating enzyme]-L-cysteine + S-ubiquitinyl-[E2 ubiquitin-conjugating enzyme]-L-cysteine.. The protein operates within protein modification; protein ubiquitination. In terms of biological role, catalyzes the covalent attachment of ubiquitin to other proteins. Acts as an essential factor of the anaphase promoting complex/cyclosome (APC/C), a cell cycle-regulated ubiquitin ligase that controls progression through mitosis. Acts by specifically elongating 'Lys-11'-linked polyubiquitin chains initiated by the E2 enzyme ube2c/ubch10 on APC/C substrates, enhancing the degradation of APC/C substrates by the proteasome and promoting mitotic exit. The protein is Ubiquitin-conjugating enzyme E2 S (ube2s) of Danio rerio (Zebrafish).